The chain runs to 326 residues: Iron-sulfur cluster assembly SufBD family protein PH0883 (326 aa).

Belongs to the iron-sulfur cluster assembly SufBD family.

The protein is Iron-sulfur cluster assembly SufBD family protein PH0883 of Pyrococcus horikoshii (strain ATCC 700860 / DSM 12428 / JCM 9974 / NBRC 100139 / OT-3).